Consider the following 248-residue polypeptide: ATP synthase subunit a, chloroplastic (248 aa).

5 helical membrane-spanning segments follow: residues 37–57, 96–116, 135–155, 200–220, and 221–241; these read AQVL…AVLA, VPFI…GALF, INTT…AGLH, LVVA…MMFL, and GLFT…AYIG.

This sequence belongs to the ATPase A chain family. F-type ATPases have 2 components, CF(1) - the catalytic core - and CF(0) - the membrane proton channel. CF(1) has five subunits: alpha(3), beta(3), gamma(1), delta(1), epsilon(1). CF(0) has four main subunits: a, b, b' and c.

The protein localises to the plastid. It is found in the chloroplast thylakoid membrane. Functionally, key component of the proton channel; it plays a direct role in the translocation of protons across the membrane. The polypeptide is ATP synthase subunit a, chloroplastic (Marchantia polymorpha (Common liverwort)).